The primary structure comprises 746 residues: Probably inactive copalyl diphosphate synthase 3 (746 aa).

The short motif at 331 to 334 (DVND) is the DXDD motif; degenerated element.

The protein belongs to the terpene synthase family. Tpsc subfamily. Mostly expressed in stems, and, at low levels, in roots and leaves, but barely in flowers.

The sequence is that of Probably inactive copalyl diphosphate synthase 3 from Isodon rubescens (Rabdosia rubescens).